The chain runs to 430 residues: Ribosomal protein uS12 methylthiotransferase RimO (430 aa).

An MTTase N-terminal domain is found at 4-119 (LKINFISLGC…IPVLFDIKPK (116 aa)). 6 residues coordinate [4Fe-4S] cluster: Cys13, Cys49, Cys82, Cys141, Cys145, and Cys148. Positions 127–358 (STPKHTAYLK…SALQENITEQ (232 aa)) constitute a Radical SAM core domain. The TRAM domain maps to 361 to 430 (KSLIGKELDI…DKYDVVGEAE (70 aa)).

It belongs to the methylthiotransferase family. RimO subfamily. The cofactor is [4Fe-4S] cluster.

It localises to the cytoplasm. The enzyme catalyses L-aspartate(89)-[ribosomal protein uS12]-hydrogen + (sulfur carrier)-SH + AH2 + 2 S-adenosyl-L-methionine = 3-methylsulfanyl-L-aspartate(89)-[ribosomal protein uS12]-hydrogen + (sulfur carrier)-H + 5'-deoxyadenosine + L-methionine + A + S-adenosyl-L-homocysteine + 2 H(+). In terms of biological role, catalyzes the methylthiolation of an aspartic acid residue of ribosomal protein uS12. This Sulfurihydrogenibium sp. (strain YO3AOP1) protein is Ribosomal protein uS12 methylthiotransferase RimO.